A 312-amino-acid polypeptide reads, in one-letter code: Calcium-independent mitochondrial carrier protein SCaMC-3L (312 aa).

Solcar repeat units lie at residues 27–113 (GTLW…SRNF), 121–206 (PSFQ…LRCL), and 217–304 (PSGL…MKKT). 6 helical membrane-spanning segments follow: residues 33–50 (LLSG…TAPL), 88–107 (GNGI…FSVF), 131–144 (SLAV…INPM), 182–200 (YLPN…LAVY), 219–243 (GLVS…LTLV), and 279–298 (GMTP…YLVY).

It belongs to the mitochondrial carrier (TC 2.A.29) family. In terms of tissue distribution, mainly expressed in testis and at lesser levels in brain.

It localises to the mitochondrion inner membrane. It catalyses the reaction Mg(2+)(out) + phosphate(in) + ATP(out) = Mg(2+)(in) + phosphate(out) + ATP(in). It carries out the reaction ADP(out) + phosphate(in) + H(+)(out) = ADP(in) + phosphate(out) + H(+)(in). Functionally, calcium-independent ATP-Mg/Pi exchanger that catalyzes the electroneutral exchange of Mg-ATP or free ADP against an hydrogenphosphate and participates in the net transport of adenine nucleotides across the mitochondria inner membrane. The protein is Calcium-independent mitochondrial carrier protein SCaMC-3L of Rattus norvegicus (Rat).